A 242-amino-acid polypeptide reads, in one-letter code: Caspase-14 (242 aa).

A propeptide spanning residues 1 to 5 (MSNPR) is cleaved from the precursor. Active-site residues include His89 and Cys132. Positions 147-152 (EIVMVI) are excised as a propeptide.

Belongs to the peptidase C14A family. Heterodimer of a large and a small subunit, both processed from the precursor; the mature active form is a p17/p10 dimer and the intermediate form a p20/p8 dimer. Post-translationally, maturation by proteolytic processing appears to be a two-step process. The precursor is processed by KLK7 to yield the p20/p8 intermediate form which acts on the precursor to yield the p17/p10 mature form. Initially, cleavage between Ile-152 and Lys-153 has been proposed to yield the large and small subunits of the active enzyme. As to expression, expressed in keratinocytes of adult skin suprabasal layers (from spinous layers to the stratum granulosum and stratum corneum) (at protein level). Expressed in keratinocytes of hair shaft and sebaceous glands (at protein level). In psoriatic skin only expressed at very low levels. The p17/10 mature form is expressed in epidermis stratum corneum, the p20/p8 intermediate form in epidermis upper granular cells of the stratum granulosum.

It is found in the cytoplasm. The protein resides in the nucleus. Its activity is regulated as follows. Inhibited by caspase-1 inhibitor YVAD-FMK and the pan-caspase inhibitor VAD-FMK. Its function is as follows. Non-apoptotic caspase involved in epidermal differentiation. Is the predominant caspase in epidermal stratum corneum. Seems to play a role in keratinocyte differentiation and is required for cornification. Regulates maturation of the epidermis by proteolytically processing filaggrin. In vitro has a preference for the substrate [WY]-X-X-D motif and is active on the synthetic caspase substrate WEHD-ACF. Involved in processing of prosaposin in the epidermis. May be involved in retinal pigment epithelium cell barrier function. Involved in DNA degradation in differentiated keratinocytes probably by cleaving DFFA/ICAD leading to liberation of DFFB/CAD. This Homo sapiens (Human) protein is Caspase-14 (CASP14).